The following is a 143-amino-acid chain: Ponticulin (143 aa).

Residues 1–22 (MLVLRNLLALVTLALLFTLSSA) form the signal peptide. Asn111 carries an N-linked (GlcNAc...) asparagine glycan. Ser118 carries the GPI-like-anchor amidated serine lipid modification. A propeptide spans 119 to 143 (SSGSTVMIGLASSLLFAFATLLALF) (removed in mature form).

It belongs to the ponticulin family. In terms of assembly, monomer. In terms of processing, disulfide bond(s) stabilize the native, actin-binding conformation of ponticulin. The GPI-like-anchor contains a phosphoceramide group, rather than a phosphatidyl group.

Its subcellular location is the cell membrane. Functionally, binds F-actin and nucleates actin assembly. Major high affinity link between the plasma membrane and the cortical actin network. The protein is Ponticulin (ponA) of Dictyostelium discoideum (Social amoeba).